The following is a 294-amino-acid chain: Undecaprenyl-diphosphatase (294 aa).

The next 6 helical transmembrane spans lie at 39–59 (PGAAFTAIIQIGTELAVILYF), 93–113 (ATLGWNIIVGSIPIVILGFTL), 123–143 (NLWITVTVLLVFGVLLWVVDA), 198–218 (SFLMAIPAVFGSGLLETVKAV), 232–252 (PTLVAMVISFVLGYIVIIGFL), and 268–288 (IGLAVVVALLLIVGVLPAIDP).

The protein belongs to the UppP family.

It is found in the cell membrane. The enzyme catalyses di-trans,octa-cis-undecaprenyl diphosphate + H2O = di-trans,octa-cis-undecaprenyl phosphate + phosphate + H(+). In terms of biological role, catalyzes the dephosphorylation of undecaprenyl diphosphate (UPP). Confers resistance to bacitracin. This Bifidobacterium longum subsp. infantis (strain ATCC 15697 / DSM 20088 / JCM 1222 / NCTC 11817 / S12) protein is Undecaprenyl-diphosphatase.